The chain runs to 392 residues: Phosphoglycerate kinase (392 aa).

Substrate-binding positions include 26–28, Arg-41, 64–67, Arg-118, and Arg-151; these read DLN and HLGR. Residues Lys-202, Glu-319, and 345–348 each bind ATP; that span reads GGDT.

It belongs to the phosphoglycerate kinase family. In terms of assembly, monomer.

It is found in the cytoplasm. The catalysed reaction is (2R)-3-phosphoglycerate + ATP = (2R)-3-phospho-glyceroyl phosphate + ADP. The protein operates within carbohydrate degradation; glycolysis; pyruvate from D-glyceraldehyde 3-phosphate: step 2/5. This is Phosphoglycerate kinase from Photobacterium profundum (strain SS9).